The sequence spans 263 residues: Neuferricin (263 aa).

Positions 1 to 22 are cleaved as a signal peptide; sequence MLRICGLGVVLSLAVAAVAVMA. Positions 35–134 constitute a Cytochrome b5 heme-binding domain; sequence IRLFLPEELA…KNYVFVGRLV (100 aa). The tract at residues 220–249 is disordered; the sequence is VRTTGPPSDQQDNPRHSNHGDLDNPNLEEY. A compositionally biased stretch (basic and acidic residues) spans 231-241; it reads DNPRHSNHGDL.

Belongs to the cytochrome b5 family. MAPR subfamily. Expressed in various tissues including brain, heart, adrenal gland, and kidney. In the brain, mainly expressed in pyramidal cells around the CA3 region of Ammon horn in hippocampus. Present in brain (at protein level).

Its subcellular location is the secreted. Heme-binding protein which promotes neuronal but not astrocyte differentiation. In Mus musculus (Mouse), this protein is Neuferricin.